We begin with the raw amino-acid sequence, 278 residues long: Diaminopimelate epimerase (278 aa).

The substrate site is built by N13 and N66. C75 (proton donor) is an active-site residue. Residues 76–77, N162, N195, and 213–214 contribute to the substrate site; these read GN and ER. C222 functions as the Proton acceptor in the catalytic mechanism. Residue 223-224 participates in substrate binding; it reads GT.

This sequence belongs to the diaminopimelate epimerase family. Homodimer.

It is found in the cytoplasm. The catalysed reaction is (2S,6S)-2,6-diaminopimelate = meso-2,6-diaminopimelate. It participates in amino-acid biosynthesis; L-lysine biosynthesis via DAP pathway; DL-2,6-diaminopimelate from LL-2,6-diaminopimelate: step 1/1. Its function is as follows. Catalyzes the stereoinversion of LL-2,6-diaminopimelate (L,L-DAP) to meso-diaminopimelate (meso-DAP), a precursor of L-lysine and an essential component of the bacterial peptidoglycan. This chain is Diaminopimelate epimerase, found in Trichodesmium erythraeum (strain IMS101).